Reading from the N-terminus, the 286-residue chain is Polyamine aminopropyltransferase (286 aa).

A PABS domain is found at 5-238 (TMWHETLHDQ…GIMTFAWATD (234 aa)). Gln33 contributes to the S-methyl-5'-thioadenosine binding site. 2 residues coordinate spermidine: His64 and Asp88. S-methyl-5'-thioadenosine is bound by residues Glu108 and 140–141 (DG). Asp158 acts as the Proton acceptor in catalysis. 158–161 (DCTD) is a spermidine binding site. S-methyl-5'-thioadenosine is bound at residue Pro165.

The protein belongs to the spermidine/spermine synthase family. In terms of assembly, homodimer or homotetramer.

It is found in the cytoplasm. It carries out the reaction S-adenosyl 3-(methylsulfanyl)propylamine + putrescine = S-methyl-5'-thioadenosine + spermidine + H(+). The protein operates within amine and polyamine biosynthesis; spermidine biosynthesis; spermidine from putrescine: step 1/1. Catalyzes the irreversible transfer of a propylamine group from the amino donor S-adenosylmethioninamine (decarboxy-AdoMet) to putrescine (1,4-diaminobutane) to yield spermidine. The chain is Polyamine aminopropyltransferase from Salmonella paratyphi A (strain ATCC 9150 / SARB42).